The primary structure comprises 294 residues: Small ribosomal subunit protein uS2 (294 aa).

The segment covering 232–245 (RAAEQDKAADDKAQ) has biased composition (basic and acidic residues). The segment at 232 to 294 (RAAEQDKAAD…GSEEDGEAAN (63 aa)) is disordered. Over residues 246-265 (EQAAAEAAKPEPAAPAPAAE) the composition is skewed to low complexity.

This sequence belongs to the universal ribosomal protein uS2 family.

The sequence is that of Small ribosomal subunit protein uS2 from Desulfatibacillum aliphaticivorans.